The sequence spans 960 residues: MRRTARIMLVLLGIGLILFIALSGLFEDYLWYSDLGYSQLFWTPLISKGIIQIINGTILFTFIAGTLFSIRHAILTFVNERLRKRLRLVHEMDRPLYHLSQRKMTLWLIIISVLISFGVSFVTGFTGWLEVLTFLNATPFGQGDPIFFKDLGFYVFQLPFFITIYNAFFGPLFFLTFFTIVFYSFAGVIHFQSLLIWKKQAIEINSAARRHLALLITVLFLFKGFGCYFDTFRLLYSQHGLVLGAGYADLHATLPALKALLVLCALGVIGGGLAFFKDEVRLLTLPILAIFISIPLLSGLGPMVLQSLVVIPNELEKETPYIQNEIALTRFAYGLDQISEEDYQADQPLTSETLQKELPTLNNVRLNDPHPLLRTYTQKQGIRPYYKFYNIDMDRYWINGEYRQVMLAPREFSYQDLEKTAQTFVNLRFKYTHGFGVVASFANAVTPEGLPAFAIKDVPPTTDYQELQISQPRIYFGEMTHDWVVVNTDLKEFDYPEGKANAETRYEGKSGIKLTPFNRLMLSIKHGTLRFYLANEINSQSRILLHRNIMDRVEKLAPFLQYDDNPYLVVDEGRLKWIIDAYTVSKTFPYSSMYPERELNYIRNSVKVVVDAYDGTVDFFAVDAQDPILQTYRKIFPGVFKDLSAMPDTLQTHLRYPETLFKIQSTMLKNFHMTDPTVFYNKEDTWDIAKELFGSEPQNIAPYYSVMRLPDSEQPESVLMIPFTPSSNANNIRTNMVAWLAARMDGEHYGELILYKVPKNTEVDGPLQVESRIDQDPEISRQLALWDQKGSSVIRGDLVVLPLAGNFLYVEPIYLQSEKAGSIPEMKRVIVAYGDKIVMSETFEEALAQLFGVRLKLSPPPPANVSALAVSPMSAELKPEETEETTEETEEPVDPQEDTQALLKQIEQIREMLNQLEQQFKKITGDSVDVEGGKKADEDAHDVQTDPEGSVSSEQSKTNP.

7 consecutive transmembrane segments (helical) span residues 7–27 (IMLV…GLFE), 50–70 (IIQI…LFSI), 105–125 (TLWL…VTGF), 169–189 (FGPL…AGVI), 212–232 (LALL…FDTF), 256–276 (ALKA…LAFF), and 285–305 (LPIL…PMVL). Disordered regions lie at residues 866–899 (SALA…QEDT) and 924–960 (TGDS…KTNP). Acidic residues predominate over residues 881 to 897 (ETEETTEETEEPVDPQE). The span at 931–944 (EGGKKADEDAHDVQ) shows a compositional bias: basic and acidic residues. Positions 950-960 (SVSSEQSKTNP) are enriched in polar residues.

Belongs to the UPF0182 family.

The protein localises to the cell membrane. The protein is UPF0182 protein DSY1630 of Desulfitobacterium hafniense (strain Y51).